The sequence spans 327 residues: GMP reductase (327 aa).

The active-site Thioimidate intermediate is the C176. 205-228 (IIADGGIRTHGDIAKSIRFGASMV) is an NADP(+) binding site.

The protein belongs to the IMPDH/GMPR family. GuaC type 2 subfamily.

It carries out the reaction IMP + NH4(+) + NADP(+) = GMP + NADPH + 2 H(+). Its function is as follows. Catalyzes the irreversible NADPH-dependent deamination of GMP to IMP. It functions in the conversion of nucleobase, nucleoside and nucleotide derivatives of G to A nucleotides, and in maintaining the intracellular balance of A and G nucleotides. The polypeptide is GMP reductase (Streptococcus suis (strain 98HAH33)).